The sequence spans 635 residues: 1-deoxy-D-xylulose-5-phosphate synthase (635 aa).

Thiamine diphosphate-binding positions include histidine 72 and 113–115 (GHA). Position 144 (aspartate 144) interacts with Mg(2+). Thiamine diphosphate-binding positions include 145-146 (GA), asparagine 174, tyrosine 287, and glutamate 370. Asparagine 174 is a binding site for Mg(2+).

Belongs to the transketolase family. DXPS subfamily. In terms of assembly, homodimer. Mg(2+) is required as a cofactor. It depends on thiamine diphosphate as a cofactor.

It catalyses the reaction D-glyceraldehyde 3-phosphate + pyruvate + H(+) = 1-deoxy-D-xylulose 5-phosphate + CO2. It functions in the pathway metabolic intermediate biosynthesis; 1-deoxy-D-xylulose 5-phosphate biosynthesis; 1-deoxy-D-xylulose 5-phosphate from D-glyceraldehyde 3-phosphate and pyruvate: step 1/1. Functionally, catalyzes the acyloin condensation reaction between C atoms 2 and 3 of pyruvate and glyceraldehyde 3-phosphate to yield 1-deoxy-D-xylulose-5-phosphate (DXP). The protein is 1-deoxy-D-xylulose-5-phosphate synthase of Trichormus variabilis (strain ATCC 29413 / PCC 7937) (Anabaena variabilis).